The sequence spans 100 residues: uncharacterized protein (100 aa).

The first 23 residues, 1 to 23 (MKYVALAFVLSLVILQISAQVGA), serve as a signal peptide directing secretion.

In terms of tissue distribution, nacreous layer of shell (at protein level). Expressed primarily in the mantle with highest level in the mantle pallium and lower level in the mantle edge.

The protein resides in the secreted. This is an uncharacterized protein from Margaritifera margaritifera (Freshwater pearl mussel).